Reading from the N-terminus, the 496-residue chain is Endoglucanase (496 aa).

The first 23 residues, Met-1 to Ala-23, serve as a signal peptide directing secretion. Asp-93 (nucleophile) is an active-site residue. Active-site residues include His-415, Asp-467, and Glu-476.

Belongs to the glycosyl hydrolase 9 (cellulase E) family.

The catalysed reaction is Endohydrolysis of (1-&gt;4)-beta-D-glucosidic linkages in cellulose, lichenin and cereal beta-D-glucans.. Functionally, involved in ripening fruit process. This Phaseolus vulgaris (Kidney bean) protein is Endoglucanase.